The sequence spans 354 residues: tRNA-specific 2-thiouridylase MnmA (354 aa).

Residues 6–13 (LLSGGVDS) and leucine 33 each bind ATP. The active-site Nucleophile is cysteine 100. Residues cysteine 100 and cysteine 195 are joined by a disulfide bond. Position 123 (glycine 123) interacts with ATP. An interaction with tRNA region spans residues 145–147 (KDQ). The Cysteine persulfide intermediate role is filled by cysteine 195.

It belongs to the MnmA/TRMU family.

It is found in the cytoplasm. It catalyses the reaction S-sulfanyl-L-cysteinyl-[protein] + uridine(34) in tRNA + AH2 + ATP = 2-thiouridine(34) in tRNA + L-cysteinyl-[protein] + A + AMP + diphosphate + H(+). In terms of biological role, catalyzes the 2-thiolation of uridine at the wobble position (U34) of tRNA, leading to the formation of s(2)U34. The sequence is that of tRNA-specific 2-thiouridylase MnmA from Borrelia recurrentis (strain A1).